The following is a 451-amino-acid chain: DNA polymerase IV (451 aa).

The 183-residue stretch at 5–187 (VIHVDMDAFF…LPVGRLWGVG (183 aa)) folds into the UmuC domain. Mg(2+) is bound by residues aspartate 9 and aspartate 104. Glutamate 105 is a catalytic residue.

It belongs to the DNA polymerase type-Y family. In terms of assembly, monomer. The cofactor is Mg(2+).

The protein resides in the cytoplasm. It carries out the reaction DNA(n) + a 2'-deoxyribonucleoside 5'-triphosphate = DNA(n+1) + diphosphate. Functionally, poorly processive, error-prone DNA polymerase involved in untargeted mutagenesis. Copies undamaged DNA at stalled replication forks, which arise in vivo from mismatched or misaligned primer ends. These misaligned primers can be extended by PolIV. Exhibits no 3'-5' exonuclease (proofreading) activity. May be involved in translesional synthesis, in conjunction with the beta clamp from PolIII. This Corynebacterium diphtheriae (strain ATCC 700971 / NCTC 13129 / Biotype gravis) protein is DNA polymerase IV.